We begin with the raw amino-acid sequence, 397 residues long: UDP-GlcNAc:betaGal beta-1,3-N-acetylglucosaminyltransferase 7 (397 aa).

The Cytoplasmic portion of the chain corresponds to 1-6; that stretch reads MSLWKK. The chain crosses the membrane as a helical span at residues 7–26; that stretch reads TLYKSVCLALALLVAVTVFQ. The Lumenal portion of the chain corresponds to 27–397; the sequence is RSVTPGQFLQ…LTCSVKFQVL (371 aa). N-linked (GlcNAc...) asparagine glycosylation is found at asparagine 84, asparagine 90, asparagine 210, and asparagine 387.

This sequence belongs to the glycosyltransferase 31 family. In terms of tissue distribution, strongly expressed in placenta and colon. Moderately expressed in lung, stomach, small intestine and kidney. Very weakly expressed in cerebrum, cerebellum, heart and testis.

It is found in the golgi apparatus membrane. Its pathway is protein modification; protein glycosylation. N-acetyl glucosamine (GlcNAc) transferase that catalyzes the transfer of GlcNAc via a beta1-&gt;3 linkage from UDP-GlcNAc to the non-reducing terminal galactose (Gal) in the linearly growing chain of N- and O-linked keratan sulfate proteoglycans. Cooperates with B4GALT4 galactosyltransferase and CHST6 and CHST1 sulfotransferases to construct and elongate mono- and disulfated disaccharide units [-&gt;3Galbeta1-&gt;4(6-sulfoGlcNAcbeta)1-&gt;] and [-&gt;3(6-sulfoGalbeta)1-&gt;4(6-sulfoGlcNAcbeta)1-&gt;] within keratan sulfate polymer. Involved in biosynthesis of N-linked keratan sulfate proteoglycans in cornea, with an impact on proteoglycan fibril organization and corneal transparency. May play a role in the maintenance of tissue architecture by suppressing cellular motility and invasion. This is UDP-GlcNAc:betaGal beta-1,3-N-acetylglucosaminyltransferase 7 (B3gnt7) from Mus musculus (Mouse).